An 894-amino-acid chain; its full sequence is Leucine--tRNA ligase, mitochondrial (894 aa).

The transit peptide at 1 to 9 (MLSRPSSRF) directs the protein to the mitochondrion. A 'HIGH' region motif is present at residues 56-66 (PYPSGALHIGH). A 'KMSKS' region motif is present at residues 646–650 (KMSKS). K649 provides a ligand contact to ATP.

Belongs to the class-I aminoacyl-tRNA synthetase family.

It is found in the mitochondrion matrix. It catalyses the reaction tRNA(Leu) + L-leucine + ATP = L-leucyl-tRNA(Leu) + AMP + diphosphate. In terms of biological role, catalyzes the attachment of leucine to tRNA(Leu) in the mitochondrion. The chain is Leucine--tRNA ligase, mitochondrial (NAM2) from Saccharomyces cerevisiae (strain ATCC 204508 / S288c) (Baker's yeast).